The sequence spans 506 residues: Protein MGF 505-4R (506 aa).

This sequence belongs to the asfivirus MGF 505 family.

Plays a role in virus cell tropism, and may be required for efficient virus replication in macrophages. The polypeptide is Protein MGF 505-4R (Ornithodoros (relapsing fever ticks)).